Here is a 395-residue protein sequence, read N- to C-terminus: Phosphoprotein (395 aa).

Disordered stretches follow at residues Val34–Ala104, Asn126–Ala179, and Leu192–Val214. A compositionally biased stretch (basic and acidic residues) spans Thr65–Lys74. Polar residues-rich tracts occupy residues Pro89–Thr98 and Pro147–Asp178. The tract at residues Asp222–Gly285 is multimerization.

The protein belongs to the rubulavirus/avulavirus P protein family. In terms of assembly, homotetramer. Interacts (via multimerization domain) with polymerase L; this interaction forms the polymerase L-P complex. Interacts (via N-terminus) with N0 (via Ncore); this interaction allows P to chaperon N0 to avoid N polymerization before encapsidation. Interacts (via C-terminus) with N-RNA template; this interaction positions the polymerase on the template for both transcription and replication.

In terms of biological role, essential cofactor of the RNA polymerase L that plays a central role in the transcription and replication by forming the polymerase complex with RNA polymerase L and recruiting L to the genomic N-RNA template for RNA synthesis. Also plays a central role in the encapsidation of nascent RNA chains by forming the encapsidation complex with the nucleocapsid protein N (N-P complex). Acts as a chaperone for newly synthesized free N protein, so-called N0, allowing encapsidation of nascent RNA chains during replication. The nucleoprotein protein N prevents excessive phosphorylation of P, which leads to down-regulation of viral transcription/ replication. Participates, together with N, in the formation of viral factories (viroplasms), which are large inclusions in the host cytoplasm where replication takes place. The chain is Phosphoprotein (P/V) from Newcastle disease virus (strain Ulster/2C) (NDV).